The primary structure comprises 253 residues: 2-dehydro-3-deoxy-D-gluconate 5-dehydrogenase (253 aa).

14–38 lines the NAD(+) pocket; that stretch reads LITGCDTGLGQGMAVGLAEAGCDIV. Substrate is bound at residue Ser-145. Tyr-158 (proton acceptor) is an active-site residue.

This sequence belongs to the short-chain dehydrogenases/reductases (SDR) family.

The enzyme catalyses 2-dehydro-3-deoxy-D-gluconate + NAD(+) = 3-deoxy-D-glycero-2,5-hexodiulosonate + NADH + H(+). Its pathway is glycan metabolism; pectin degradation; 2-dehydro-3-deoxy-D-gluconate from pectin: step 5/5. Functionally, catalyzes the reduction of 2,5-diketo-3-deoxygluconate (DKII or 4,6-dihydroxy-2,5-dioxohexanoate) into 2-keto-3-deoxygluconate (KDG or 2-dehydro-3-deoxygluconate) with a concomitant oxidation of NADH. The sequence is that of 2-dehydro-3-deoxy-D-gluconate 5-dehydrogenase (kduD) from Dickeya dadantii (strain 3937) (Erwinia chrysanthemi (strain 3937)).